Consider the following 207-residue polypeptide: Succinyl-CoA:3-ketoacid coenzyme A transferase subunit B (207 aa).

Residue Glu-43 is part of the active site.

This sequence belongs to the 3-oxoacid CoA-transferase subunit B family. In terms of assembly, heterodimer of a subunit A and a subunit B.

The enzyme catalyses a 3-oxo acid + succinyl-CoA = a 3-oxoacyl-CoA + succinate. The sequence is that of Succinyl-CoA:3-ketoacid coenzyme A transferase subunit B (scoB) from Helicobacter pylori (strain J99 / ATCC 700824) (Campylobacter pylori J99).